The following is a 182-amino-acid chain: UPF0397 protein BCG9842_B2659 (182 aa).

Transmembrane regions (helical) follow at residues valine 9–isoleucine 29, alanine 40–isoleucine 60, tryptophan 71–isoleucine 91, isoleucine 114–valine 134, and isoleucine 142–leucine 162.

It belongs to the UPF0397 family.

The protein localises to the cell membrane. In Bacillus cereus (strain G9842), this protein is UPF0397 protein BCG9842_B2659.